A 943-amino-acid chain; its full sequence is Multimerin-2 (943 aa).

Residues 1-22 (MIPTLLLGFGVYLSWGLLGSWA) form the signal peptide. The EMI domain occupies 54–132 (RRNWCPYQKS…PGFQGPDCQD (79 aa)). 3 disulfide bridges follow: Cys-58–Cys-122, Cys-85–Cys-92, and Cys-121–Cys-130. A glycan (O-linked (Fuc...) serine) is linked at Ser-63. The O-linked (Fuc) threonine glycan is linked to Thr-67. The interval 128 to 150 (PDCQDHNPTANPEPTEPSGKLQE) is disordered. Residues Asn-205, Asn-214, Asn-249, Asn-261, Asn-350, Asn-379, Asn-439, and Asn-472 are each glycosylated (N-linked (GlcNAc...) asparagine). 2 coiled-coil regions span residues 391–480 (EEEL…HLHA) and 551–580 (RGEG…ALKT). A glycan (N-linked (GlcNAc...) asparagine) is linked at Asn-583. Positions 688 to 720 (DSGREEEAMTLAELEQEIRRLSSDVKQIGQCCE) form a coiled coil. Asn-728 and Asn-766 each carry an N-linked (GlcNAc...) asparagine glycan. The tract at residues 778–801 (LSKKDKKQPRGPGESRKRDKKQVV) is disordered. In terms of domain architecture, C1q spans 815-943 (ETGSPVAFYA…AFGGFLMFKT (129 aa)). The N-linked (GlcNAc...) asparagine glycan is linked to Asn-839.

In terms of assembly, heteromer of p110, p125, p140 and p200 subunits; disulfide-linked. Interacts with VEGFA. Interacts with CD93; this interaction promotes angiogenesis. Interacts with CD248. Post-translationally, N- and O-glycosylated. In terms of processing, processed by matrix metalloproteinases (MMPs) including MMP9 and, to a lesser degree, by MMP2 upon angiogenic stimulation. O-fucosylated within the EMI domain (at Ser-63 and Thr-67) by FUT10/POFUT3 and FUT11/POFUT4.

The protein localises to the secreted. It is found in the extracellular space. Its subcellular location is the extracellular matrix. Extracellular matrix protein that plays significant roles in the vascular system and is required for the maintenance and stability of blood vessel. Affects several essential steps in angiogenesis including endothelial cell proliferation, migration, and tube formation. Positively regulates angiogenesis by acting as a ligand for CD93 receptor. The polypeptide is Multimerin-2 (Mus musculus (Mouse)).